The following is a 257-amino-acid chain: Type III pantothenate kinase (257 aa).

24 to 31 (MIGNSRLH) contacts ATP. Substrate-binding positions include Tyr-96 and 100 to 103 (GIDR). The active-site Proton acceptor is Asp-102. Asp-122 contributes to the K(+) binding site. Thr-125 contributes to the ATP binding site. Position 180 (Thr-180) interacts with substrate.

It belongs to the type III pantothenate kinase family. As to quaternary structure, homodimer. Requires NH4(+) as cofactor. K(+) is required as a cofactor.

The protein localises to the cytoplasm. It carries out the reaction (R)-pantothenate + ATP = (R)-4'-phosphopantothenate + ADP + H(+). It participates in cofactor biosynthesis; coenzyme A biosynthesis; CoA from (R)-pantothenate: step 1/5. Catalyzes the phosphorylation of pantothenate (Pan), the first step in CoA biosynthesis. The protein is Type III pantothenate kinase of Synechocystis sp. (strain ATCC 27184 / PCC 6803 / Kazusa).